The sequence spans 76 residues: uncharacterized protein (76 aa).

This is an uncharacterized protein from Thermoproteus tenax virus 1 (strain KRA1) (TTV1).